A 142-amino-acid chain; its full sequence is Transcription antitermination protein NusB (142 aa).

The protein belongs to the NusB family.

Involved in transcription antitermination. Required for transcription of ribosomal RNA (rRNA) genes. Binds specifically to the boxA antiterminator sequence of the ribosomal RNA (rrn) operons. The chain is Transcription antitermination protein NusB from Roseiflexus castenholzii (strain DSM 13941 / HLO8).